The sequence spans 147 residues: SsrA-binding protein (147 aa).

It belongs to the SmpB family.

The protein localises to the cytoplasm. Its function is as follows. Required for rescue of stalled ribosomes mediated by trans-translation. Binds to transfer-messenger RNA (tmRNA), required for stable association of tmRNA with ribosomes. tmRNA and SmpB together mimic tRNA shape, replacing the anticodon stem-loop with SmpB. tmRNA is encoded by the ssrA gene; the 2 termini fold to resemble tRNA(Ala) and it encodes a 'tag peptide', a short internal open reading frame. During trans-translation Ala-aminoacylated tmRNA acts like a tRNA, entering the A-site of stalled ribosomes, displacing the stalled mRNA. The ribosome then switches to translate the ORF on the tmRNA; the nascent peptide is terminated with the 'tag peptide' encoded by the tmRNA and targeted for degradation. The ribosome is freed to recommence translation, which seems to be the essential function of trans-translation. This chain is SsrA-binding protein, found in Mycoplasma pneumoniae (strain ATCC 29342 / M129 / Subtype 1) (Mycoplasmoides pneumoniae).